The sequence spans 345 residues: Dihydroorotase (345 aa).

Residues His13 and His15 each contribute to the Zn(2+) site. Residues 15–17 (HFR) and Asn41 contribute to the substrate site. Zn(2+) is bound by residues Lys98, His135, and His173. Lys98 carries the N6-carboxylysine modification. Substrate is bound at residue His135. Leu218 contributes to the substrate binding site. Asp246 serves as a coordination point for Zn(2+). Asp246 is a catalytic residue. Substrate contacts are provided by His250 and Ala262.

The protein belongs to the metallo-dependent hydrolases superfamily. DHOase family. Class II DHOase subfamily. As to quaternary structure, homodimer. Requires Zn(2+) as cofactor.

It carries out the reaction (S)-dihydroorotate + H2O = N-carbamoyl-L-aspartate + H(+). The protein operates within pyrimidine metabolism; UMP biosynthesis via de novo pathway; (S)-dihydroorotate from bicarbonate: step 3/3. Functionally, catalyzes the reversible cyclization of carbamoyl aspartate to dihydroorotate. The polypeptide is Dihydroorotase (Shewanella piezotolerans (strain WP3 / JCM 13877)).